A 783-amino-acid polypeptide reads, in one-letter code: Spindle pole body protein ppc89 (783 aa).

At Ser157 the chain carries Phosphoserine. Disordered stretches follow at residues 180–216 (FDSP…ETPS), 434–458 (KESN…MNEA), 471–504 (ENKS…PTSG), and 528–610 (LSQS…MKGN). Polar residues-rich tracts occupy residues 201–216 (RSKT…ETPS), 437–453 (NVTS…SKPL), and 474–504 (SGAN…PTSG). Positions 536 to 551 (PVKHRKRRPKSKRRIT) are enriched in basic residues. Positions 566–590 (ESDEGSEEISLDSEYSDILSDDGDF) are enriched in acidic residues.

The protein resides in the cytoplasm. It is found in the cytoskeleton. The protein localises to the microtubule organizing center. Its subcellular location is the spindle pole body. In terms of biological role, has a role in meiosis. This is Spindle pole body protein ppc89 (ppc89) from Schizosaccharomyces pombe (strain 972 / ATCC 24843) (Fission yeast).